The following is a 118-amino-acid chain: Probable small nuclear ribonucleoprotein Sm D2 (118 aa).

A Sm domain is found at 29–115; that stretch reads LSILTNSVKN…VILVVKNPLA (87 aa).

The protein belongs to the snRNP core protein family.

The protein localises to the nucleus. It localises to the cytoplasm. Its subcellular location is the cytosol. Plays a role in pre-mRNA splicing as a core component of the spliceosomal U1, U2, U4 and U5 small nuclear ribonucleoproteins (snRNPs), the building blocks of the spliceosome. The protein is Probable small nuclear ribonucleoprotein Sm D2 (snr-4) of Caenorhabditis elegans.